Here is a 150-residue protein sequence, read N- to C-terminus: Ribonuclease H (150 aa).

Positions 2–143 constitute an RNase H type-1 domain; sequence PAPILDIFVD…ADELANRAIE (142 aa). Mg(2+) is bound by residues Asp11, Glu49, Asp71, and Asp135.

This sequence belongs to the RNase H family. In terms of assembly, monomer. Mg(2+) is required as a cofactor.

The protein localises to the cytoplasm. The enzyme catalyses Endonucleolytic cleavage to 5'-phosphomonoester.. Functionally, endonuclease that specifically degrades the RNA of RNA-DNA hybrids. The sequence is that of Ribonuclease H from Dichelobacter nodosus (strain VCS1703A).